The chain runs to 223 residues: Chorismate dehydratase (223 aa).

The protein belongs to the MqnA/MqnD family. MqnA subfamily.

The enzyme catalyses chorismate = 3-[(1-carboxyvinyl)-oxy]benzoate + H2O. Its pathway is quinol/quinone metabolism; menaquinone biosynthesis. Its function is as follows. Catalyzes the dehydration of chorismate into 3-[(1-carboxyvinyl)oxy]benzoate, a step in the biosynthesis of menaquinone (MK, vitamin K2). This Campylobacter jejuni subsp. jejuni serotype O:23/36 (strain 81-176) protein is Chorismate dehydratase.